A 199-amino-acid polypeptide reads, in one-letter code: Small ribosomal subunit protein uS5 (199 aa).

The disordered stretch occupies residues 1–29 (MATAGRRGGAASERRERRESRRQEASPEK). Positions 12–27 (SERRERRESRRQEASP) are enriched in basic and acidic residues. The S5 DRBM domain occupies 32 to 95 (FLERVVTINR…EEAKKHFFTV (64 aa)).

The protein belongs to the universal ribosomal protein uS5 family. As to quaternary structure, part of the 30S ribosomal subunit. Contacts proteins S4 and S8.

Its function is as follows. With S4 and S12 plays an important role in translational accuracy. Located at the back of the 30S subunit body where it stabilizes the conformation of the head with respect to the body. This Acidothermus cellulolyticus (strain ATCC 43068 / DSM 8971 / 11B) protein is Small ribosomal subunit protein uS5.